The following is a 107-amino-acid chain: Anti-adapter protein IraM (107 aa).

The protein belongs to the IraM/RssC family.

The protein resides in the cytoplasm. In terms of biological role, inhibits RpoS proteolysis by regulating RssB activity, thereby increasing the stability of the sigma stress factor RpoS during magnesium starvation. The polypeptide is Anti-adapter protein IraM (Shigella sonnei (strain Ss046)).